The primary structure comprises 116 residues: uncharacterized protein (116 aa).

Residues 5-23 (LLAVETWYMLILSFRFLFF) traverse the membrane as a helical segment.

The protein resides in the membrane. This is an uncharacterized protein from Saccharomyces cerevisiae (strain ATCC 204508 / S288c) (Baker's yeast).